Here is a 442-residue protein sequence, read N- to C-terminus: Aspartate--tRNA(Asp/Asn) ligase (442 aa).

Glu172 contacts L-aspartate. Positions 194-197 (QFYK) are aspartate. An L-aspartate-binding site is contributed by Arg216. Residues 216 to 218 (RAE), 224 to 226 (RHL), and Glu365 each bind ATP. The Mg(2+) site is built by Glu365 and Thr368. The L-aspartate site is built by Thr368 and Arg372. Position 413–416 (413–416 (GLER)) interacts with ATP.

Belongs to the class-II aminoacyl-tRNA synthetase family. Type 2 subfamily. Homodimer. It depends on Mg(2+) as a cofactor.

Its subcellular location is the cytoplasm. The catalysed reaction is tRNA(Asx) + L-aspartate + ATP = L-aspartyl-tRNA(Asx) + AMP + diphosphate. Aspartyl-tRNA synthetase with relaxed tRNA specificity since it is able to aspartylate not only its cognate tRNA(Asp) but also tRNA(Asn). Reaction proceeds in two steps: L-aspartate is first activated by ATP to form Asp-AMP and then transferred to the acceptor end of tRNA(Asp/Asn). The sequence is that of Aspartate--tRNA(Asp/Asn) ligase (aspS) from Aeropyrum pernix (strain ATCC 700893 / DSM 11879 / JCM 9820 / NBRC 100138 / K1).